We begin with the raw amino-acid sequence, 133 residues long: Small ribosomal subunit protein uS8 (133 aa).

The protein belongs to the universal ribosomal protein uS8 family. As to quaternary structure, part of the 30S ribosomal subunit. Contacts proteins S5 and S12.

Functionally, one of the primary rRNA binding proteins, it binds directly to 16S rRNA central domain where it helps coordinate assembly of the platform of the 30S subunit. This chain is Small ribosomal subunit protein uS8, found in Mycoplasmoides gallisepticum (strain R(low / passage 15 / clone 2)) (Mycoplasma gallisepticum).